A 431-amino-acid chain; its full sequence is Glucose-1-phosphate adenylyltransferase (431 aa).

Residue Lys39 coordinates beta-D-fructose 1,6-bisphosphate. AMP contacts are provided by Arg40, His46, and Arg52. Tyr114 serves as a coordination point for alpha-D-glucose 1-phosphate. Arg130 is a binding site for AMP. Residues Gly179, 194–195 (EK), and Ser212 each bind alpha-D-glucose 1-phosphate. Arg386 contacts AMP. 429–431 (QER) contributes to the beta-D-fructose 1,6-bisphosphate binding site.

The protein belongs to the bacterial/plant glucose-1-phosphate adenylyltransferase family. In terms of assembly, homotetramer.

The catalysed reaction is alpha-D-glucose 1-phosphate + ATP + H(+) = ADP-alpha-D-glucose + diphosphate. The protein operates within glycan biosynthesis; glycogen biosynthesis. With respect to regulation, allosterically activated by fructose-1,6-bisphosphate (F16BP) and inhibited by AMP. Its function is as follows. Involved in the biosynthesis of ADP-glucose, a building block required for the elongation reactions to produce glycogen. Catalyzes the reaction between ATP and alpha-D-glucose 1-phosphate (G1P) to produce pyrophosphate and ADP-Glc. In Klebsiella pneumoniae subsp. pneumoniae (strain ATCC 700721 / MGH 78578), this protein is Glucose-1-phosphate adenylyltransferase.